The primary structure comprises 402 residues: WAT1-related protein At5g07050 (402 aa).

A run of 10 helical transmembrane segments spans residues 20–40, 48–68, 74–94, 109–129, 149–169, 196–216, 229–249, 266–286, 293–313, and 318–338; these read FAMI…KISL, VLVV…AFFF, PKIT…GPVI, TFSC…AVLF, VVTV…VELF, FLKG…LFVL, LSLT…VTFV, LAAA…QGIV, VFAT…GSFV, and IFLG…AVLW. 2 EamA domains span residues 29-159 and 208-337; these read YAGM…MLMT and LAWA…YAVL.

Belongs to the drug/metabolite transporter (DMT) superfamily. Plant drug/metabolite exporter (P-DME) (TC 2.A.7.4) family.

The protein resides in the membrane. The chain is WAT1-related protein At5g07050 from Arabidopsis thaliana (Mouse-ear cress).